Consider the following 279-residue polypeptide: Putative pyruvate, phosphate dikinase regulatory protein (279 aa).

Residue 156 to 163 coordinates ADP; that stretch reads GVSRTSKT.

It belongs to the pyruvate, phosphate/water dikinase regulatory protein family. PDRP subfamily.

The catalysed reaction is N(tele)-phospho-L-histidyl/L-threonyl-[pyruvate, phosphate dikinase] + ADP = N(tele)-phospho-L-histidyl/O-phospho-L-threonyl-[pyruvate, phosphate dikinase] + AMP + H(+). It carries out the reaction N(tele)-phospho-L-histidyl/O-phospho-L-threonyl-[pyruvate, phosphate dikinase] + phosphate + H(+) = N(tele)-phospho-L-histidyl/L-threonyl-[pyruvate, phosphate dikinase] + diphosphate. Functionally, bifunctional serine/threonine kinase and phosphorylase involved in the regulation of the pyruvate, phosphate dikinase (PPDK) by catalyzing its phosphorylation/dephosphorylation. The chain is Putative pyruvate, phosphate dikinase regulatory protein from Maricaulis maris (strain MCS10) (Caulobacter maris).